We begin with the raw amino-acid sequence, 372 residues long: Queuine tRNA-ribosyltransferase (372 aa).

Asp92 serves as the catalytic Proton acceptor. Substrate-binding positions include 92 to 96, Asp146, Gln188, and Gly215; that span reads DSGGY. Positions 246–252 are RNA binding; the sequence is GIGSLRE. Catalysis depends on Asp265, which acts as the Nucleophile. Residues 270–274 are RNA binding; important for wobble base 34 recognition; the sequence is TRLGR. 4 residues coordinate Zn(2+): Cys303, Cys305, Cys308, and His334.

The protein belongs to the queuine tRNA-ribosyltransferase family. In terms of assembly, homodimer. Within each dimer, one monomer is responsible for RNA recognition and catalysis, while the other monomer binds to the replacement base PreQ1. The cofactor is Zn(2+).

It carries out the reaction 7-aminomethyl-7-carbaguanine + guanosine(34) in tRNA = 7-aminomethyl-7-carbaguanosine(34) in tRNA + guanine. It functions in the pathway tRNA modification; tRNA-queuosine biosynthesis. Its function is as follows. Catalyzes the base-exchange of a guanine (G) residue with the queuine precursor 7-aminomethyl-7-deazaguanine (PreQ1) at position 34 (anticodon wobble position) in tRNAs with GU(N) anticodons (tRNA-Asp, -Asn, -His and -Tyr). Catalysis occurs through a double-displacement mechanism. The nucleophile active site attacks the C1' of nucleotide 34 to detach the guanine base from the RNA, forming a covalent enzyme-RNA intermediate. The proton acceptor active site deprotonates the incoming PreQ1, allowing a nucleophilic attack on the C1' of the ribose to form the product. After dissociation, two additional enzymatic reactions on the tRNA convert PreQ1 to queuine (Q), resulting in the hypermodified nucleoside queuosine (7-(((4,5-cis-dihydroxy-2-cyclopenten-1-yl)amino)methyl)-7-deazaguanosine). The sequence is that of Queuine tRNA-ribosyltransferase from Prochlorococcus marinus subsp. pastoris (strain CCMP1986 / NIES-2087 / MED4).